The sequence spans 247 residues: tRNA pseudouridine synthase A 1 (247 aa).

Catalysis depends on Asp-53, which acts as the Nucleophile. Residue Tyr-111 coordinates substrate.

It belongs to the tRNA pseudouridine synthase TruA family. In terms of assembly, homodimer.

The catalysed reaction is uridine(38/39/40) in tRNA = pseudouridine(38/39/40) in tRNA. Functionally, formation of pseudouridine at positions 38, 39 and 40 in the anticodon stem and loop of transfer RNAs. The protein is tRNA pseudouridine synthase A 1 of Bacillus cereus (strain ZK / E33L).